Consider the following 291-residue polypeptide: MKTGRIVKSISGVYQVDVNGERFNTKPRGLFRKKKFSPVVGDIVEFEVQNINEGYIHQVFERENELKRPPVSNIDTLVIVMSAVEPNFSTQLLDRFLVIAHSYQLNARILVTKKDKTPIEKQFEINELLKIYENIGYETEFIGNDDDRKKIVEAWPAGLIVLSGQSGVGKSTFLNHYRPELNLETNDISKSLNRGKHTTRHVELFERQNGYIADTPGFSALDFDHIDKDEIKDYFLELNRYGETCKFRNCNHIKEPNCNVKHQLEIGNIAQFRYDHYLQLFNEISNRKVRY.

The CP-type G domain maps to 63-221 (ENELKRPPVS…IADTPGFSAL (159 aa)). GTP is bound by residues 112-115 (TKKD) and 164-172 (GQSGVGKST). The Zn(2+) site is built by Cys245, Cys250, His252, and Cys258.

Belongs to the TRAFAC class YlqF/YawG GTPase family. RsgA subfamily. Monomer. Associates with 30S ribosomal subunit, binds 16S rRNA. Zn(2+) is required as a cofactor.

It is found in the cytoplasm. Functionally, one of several proteins that assist in the late maturation steps of the functional core of the 30S ribosomal subunit. Helps release RbfA from mature subunits. May play a role in the assembly of ribosomal proteins into the subunit. Circularly permuted GTPase that catalyzes slow GTP hydrolysis, GTPase activity is stimulated by the 30S ribosomal subunit. This Staphylococcus aureus (strain COL) protein is Small ribosomal subunit biogenesis GTPase RsgA.